The sequence spans 900 residues: Alanine--tRNA ligase (900 aa).

Zn(2+)-binding residues include His-604, His-608, Cys-708, and His-712.

The protein belongs to the class-II aminoacyl-tRNA synthetase family. The cofactor is Zn(2+).

It is found in the cytoplasm. It carries out the reaction tRNA(Ala) + L-alanine + ATP = L-alanyl-tRNA(Ala) + AMP + diphosphate. Catalyzes the attachment of alanine to tRNA(Ala) in a two-step reaction: alanine is first activated by ATP to form Ala-AMP and then transferred to the acceptor end of tRNA(Ala). Also edits incorrectly charged Ser-tRNA(Ala) and Gly-tRNA(Ala) via its editing domain. In Saccharolobus islandicus (strain L.S.2.15 / Lassen #1) (Sulfolobus islandicus), this protein is Alanine--tRNA ligase.